Reading from the N-terminus, the 332-residue chain is UPF0194 membrane protein YbhG (332 aa).

Positions 1 to 16 are cleaved as a signal peptide; it reads MMKKPVVIGLAVVVLA. Residues 108 to 211 are a coiled coil; that stretch reads EEIAQAAAAV…LQDSTLVAPS (104 aa).

Belongs to the UPF0194 family.

Its subcellular location is the periplasm. The chain is UPF0194 membrane protein YbhG from Escherichia coli O6:H1 (strain CFT073 / ATCC 700928 / UPEC).